The primary structure comprises 268 residues: M1-specific T cell receptor alpha chain (268 aa).

Positions 1–19 (MVLKFSVSILWIQLAWVST) are cleaved as a signal peptide. One can recognise an Ig-like V-type domain in the interval 20–107 (QLLEQSPQFL…QPGDTGLYLC (88 aa)). Positions 20–109 (QLLEQSPQFL…GDTGLYLCAG (90 aa)) are t cell receptor alpha variable 27. N-linked (GlcNAc...) asparagine glycosylation is found at asparagine 36 and asparagine 42. The cysteines at positions 41 and 107 are disulfide-linked. The segment at 45–49 (SVFSS) is CDR1. Residues 67-69 (VVT) form a CDR2 region. A CDR3 region spans residues 107–118 (CAGGGSQGNLIF). A t cell receptor alpha joining 42 region spans residues 110-128 (GGSQGNLIFGKGTKLSVKP). The t cell receptor alpha constant stretch occupies residues 129-268 (IQNPDPAVYQ…LLMTLRLWSS (140 aa)). Residues 147-235 (KSVCLFTDFD…LVEKSFETDT (89 aa)) enclose the Ig-like C1-type domain. A disulfide bridge connects residues cysteine 150 and cysteine 200. Asparagine 160, asparagine 194, asparagine 205, and asparagine 241 each carry an N-linked (GlcNAc...) asparagine glycan. Positions 222–243 (CDVKLVEKSFETDTNLNFQNLS) are connecting peptide. Residues 244–266 (VIGFRILLLKVAGFNLLMTLRLW) form a helical membrane-spanning segment. The Cytoplasmic portion of the chain corresponds to 267-268 (SS).

Disulfide-linked heterodimer with TRBV19*01J2S7*01C*02 beta chain. The TR primarily interacts via its CDR3-beta domain with M/matrix protein 1-derived peptide (GILGFVFTL) displayed by HLA-A*02.01 in a 'peg-notch' recognition mode. The alpha-beta TR associates with the transmembrane signaling CD3 coreceptor proteins to form the TR-CD3 (TCR). The assembly of alpha-beta TR heterodimers with CD3 occurs in the endoplasmic reticulum where a single alpha-beta TR heterodimer associates with one CD3D-CD3E heterodimer, one CD3G-CD3E heterodimer and one CD247 homodimer forming a stable octameric structure. CD3D-CD3E and CD3G-CD3E heterodimers preferentially associate with TR alpha and TR beta chains (via TM domain), respectively. The association of the CD247 homodimer is the last step of TCR assembly in the endoplasmic reticulum and is required for transport to the cell surface. Expressed in M/matrix protein 1-specific effector and memory CD8-positive T cells readily detectable in the peripheral blood, secondary lymphoid organs and lung (primary site of infection) of IAV infected individuals.

It is found in the cell membrane. Its function is as follows. The alpha chain of TRAV27*01J42*01C*01/TRBV19*01J2S7*01C*02 alpha-beta T cell receptor (TR) clonotype that is specific for HLA-A*02:01-restricted M/matrix protein 1 immunodominant epitope GILGFVFTL of influenza A virus (IAV). Classified as a public TR clonotype, it is preferentially selected in effector memory CD8-positive T cells among multiple HLA-A*02:01 carriers and confers long-lived immunity against IAV infection. Can cross-recognize sporadically emerging IAV variants by molecular mimicry, inducing immunity toward different influenza strains. Antigen recognition initiates TR-CD3 clustering on the cell surface and intracellular activation of LCK that phosphorylates the ITAM motifs of CD3G, CD3D, CD3E and CD247 enabling the recruitment of ZAP70. In turn, ZAP70 phosphorylates LAT, which recruits numerous signaling molecules to form the LAT signalosome. The LAT signalosome propagates signal branching to three major signaling pathways, the calcium, the mitogen-activated protein kinase (MAPK) kinase and the nuclear factor NF-kappa-B (NF-kB) pathways, leading to the mobilization of transcription factors that are critical for gene expression and essential for T cell differentiation into effector/memory T cells. This chain is M1-specific T cell receptor alpha chain, found in Homo sapiens (Human).